Reading from the N-terminus, the 445-residue chain is UDP-N-acetylmuramoylalanine--D-glutamate ligase (445 aa).

Residue 117-123 coordinates ATP; it reads GSNGKTT.

The protein belongs to the MurCDEF family.

It localises to the cytoplasm. The enzyme catalyses UDP-N-acetyl-alpha-D-muramoyl-L-alanine + D-glutamate + ATP = UDP-N-acetyl-alpha-D-muramoyl-L-alanyl-D-glutamate + ADP + phosphate + H(+). It functions in the pathway cell wall biogenesis; peptidoglycan biosynthesis. Functionally, cell wall formation. Catalyzes the addition of glutamate to the nucleotide precursor UDP-N-acetylmuramoyl-L-alanine (UMA). The polypeptide is UDP-N-acetylmuramoylalanine--D-glutamate ligase (Neisseria meningitidis serogroup A / serotype 4A (strain DSM 15465 / Z2491)).